A 24-amino-acid chain; its full sequence is FLPAIVGAAGQFLPKIFCAISKKC.

Residues Cys18 and Cys24 are joined by a disulfide bond.

As to expression, expressed by the skin glands.

It localises to the secreted. In terms of biological role, antibacterial activity against Gram-negative bacterium E.coli. The chain is Brevinin-1Sa from Lithobates sphenocephalus (Southern leopard frog).